The following is a 195-amino-acid chain: Adenylate kinase (195 aa).

An ATP-binding site is contributed by G10–T15. The tract at residues S30–V59 is NMP. AMP contacts are provided by residues T31, R36, G57 to V59, G85 to R88, and Q92. Residues N126–D143 are LID. ATP is bound at residue R127. Residue R150 coordinates AMP. Position 178 (A178) interacts with ATP.

Belongs to the adenylate kinase family. As to quaternary structure, monomer.

Its subcellular location is the cytoplasm. The enzyme catalyses AMP + ATP = 2 ADP. The protein operates within purine metabolism; AMP biosynthesis via salvage pathway; AMP from ADP: step 1/1. Functionally, catalyzes the reversible transfer of the terminal phosphate group between ATP and AMP. Plays an important role in cellular energy homeostasis and in adenine nucleotide metabolism. This Xanthobacter autotrophicus (strain ATCC BAA-1158 / Py2) protein is Adenylate kinase.